The primary structure comprises 207 residues: Crossover junction endodeoxyribonuclease RuvC (207 aa).

Active-site residues include Asp-11, Glu-71, and Asp-143. Mg(2+)-binding residues include Asp-11, Glu-71, and Asp-143.

This sequence belongs to the RuvC family. In terms of assembly, homodimer which binds Holliday junction (HJ) DNA. The HJ becomes 2-fold symmetrical on binding to RuvC with unstacked arms; it has a different conformation from HJ DNA in complex with RuvA. In the full resolvosome a probable DNA-RuvA(4)-RuvB(12)-RuvC(2) complex forms which resolves the HJ. Mg(2+) is required as a cofactor.

The protein localises to the cytoplasm. It carries out the reaction Endonucleolytic cleavage at a junction such as a reciprocal single-stranded crossover between two homologous DNA duplexes (Holliday junction).. Functionally, the RuvA-RuvB-RuvC complex processes Holliday junction (HJ) DNA during genetic recombination and DNA repair. Endonuclease that resolves HJ intermediates. Cleaves cruciform DNA by making single-stranded nicks across the HJ at symmetrical positions within the homologous arms, yielding a 5'-phosphate and a 3'-hydroxyl group; requires a central core of homology in the junction. The consensus cleavage sequence is 5'-(A/T)TT(C/G)-3'. Cleavage occurs on the 3'-side of the TT dinucleotide at the point of strand exchange. HJ branch migration catalyzed by RuvA-RuvB allows RuvC to scan DNA until it finds its consensus sequence, where it cleaves and resolves the cruciform DNA. In Methylobacterium radiotolerans (strain ATCC 27329 / DSM 1819 / JCM 2831 / NBRC 15690 / NCIMB 10815 / 0-1), this protein is Crossover junction endodeoxyribonuclease RuvC.